The chain runs to 826 residues: Arsenite oxidase subunit AioA (826 aa).

The [3Fe-4S] cluster site is built by C22, C25, and C29. H196, E204, R420, and H424 together coordinate substrate.

This sequence belongs to the prokaryotic molybdopterin-containing oxidoreductase family. In terms of assembly, heterodimer consisting of a large and a small subunit. The cofactor is [3Fe-4S] cluster. Mo-bis(molybdopterin guanine dinucleotide) is required as a cofactor.

The catalysed reaction is 2 oxidized [azurin] + arsenite + H2O = 2 reduced [azurin] + arsenate + 3 H(+). Involved in the detoxification of arsenic. Oxidizes As(III)O3(3-) (arsenite) to the somewhat less toxic As(V)O4(3-) (arsenate). In Alcaligenes faecalis, this protein is Arsenite oxidase subunit AioA (aioA).